Consider the following 225-residue polypeptide: Probable GTP-binding protein EngB (225 aa).

The 174-residue stretch at 31–204 folds into the EngB-type G domain; sequence VGVEIAFAGR…LGILDSWCKP (174 aa). Residues 39-46, 65-69, 83-86, 150-153, and 183-185 each bind GTP; these read GRSNAGKS, GRTQL, DLPG, TKAD, and FSS. Residues Ser-46 and Thr-67 each contribute to the Mg(2+) site.

It belongs to the TRAFAC class TrmE-Era-EngA-EngB-Septin-like GTPase superfamily. EngB GTPase family. The cofactor is Mg(2+).

Its function is as follows. Necessary for normal cell division and for the maintenance of normal septation. The chain is Probable GTP-binding protein EngB from Shewanella pealeana (strain ATCC 700345 / ANG-SQ1).